We begin with the raw amino-acid sequence, 735 residues long: Coiled-coil quantitatively-enriched protein 1 (735 aa).

Positions 514 to 719 form a coiled coil; that stretch reads AAVQYLQRRL…TLKILEQKSL (206 aa).

Interacts (during meiosis) with pcp1. Interacts with clr3, pot1, taz1 and tpz1.

It is found in the nucleus. The protein localises to the nucleoplasm. It localises to the chromosome. Its subcellular location is the telomere. Functionally, component of the meiotic bouquet that facilitates meiotic nuclear reorganization of the telomeres to the centrosome. Links telomeres to the meiotic centrosome component pcp1. Essential for the formation of normal telomere clusters during meiotic prophase. Required for telomere length regulation and chromosome segregation. Required for proper positioning of nucleosomes at heterochromatic loci and for transcriptional gene silencing (TGS) function of the Snf2/Hdac-containing repressor complex (SHREC). The sequence is that of Coiled-coil quantitatively-enriched protein 1 (ccq1) from Schizosaccharomyces pombe (strain 972 / ATCC 24843) (Fission yeast).